The chain runs to 351 residues: METNFSTPLNEYEEVSYESAGYTVLRILPLVVLGVTFVLGVLGNGLVIWVAGFRMTRTVTTICYLNLALADFSFTATLPFLIVSMAMGEKWPFGWFLCKLIHIVVDINLFGSVFLIGFIALDRCICVLHPVWAQNHRTVSLAMKVIVGPWILALVLTLPVFLFLTTVTIPNGDTYCTFNFASWGGTPEERLKVAITMLTARGIIRFVIGFSLPMSIVAICYGLIAAKIHKKGMIKSSRPLRVLTAVVASFFICWFPFQLVALLGTVWLKEMLFYGKYKIIDILVNPTSSLAFFNSCLNPMLYVFVGQDFRERLIHSLPTSLERALSEDSAPTNDTAANSASPPAETELQAM.

Topologically, residues 1 to 27 (METNFSTPLNEYEEVSYESAGYTVLRI) are extracellular. Asn4 carries N-linked (GlcNAc...) asparagine glycosylation. The helical transmembrane segment at 28–50 (LPLVVLGVTFVLGVLGNGLVIWV) threads the bilayer. Residues 51–61 (AGFRMTRTVTT) are Cytoplasmic-facing. A helical membrane pass occupies residues 62–83 (ICYLNLALADFSFTATLPFLIV). The Extracellular portion of the chain corresponds to 84-100 (SMAMGEKWPFGWFLCKL). A disulfide bridge links Cys98 with Cys176. A helical membrane pass occupies residues 101-121 (IHIVVDINLFGSVFLIGFIAL). Residues 122–140 (DRCICVLHPVWAQNHRTVS) are Cytoplasmic-facing. The helical transmembrane segment at 141 to 162 (LAMKVIVGPWILALVLTLPVFL) threads the bilayer. Residues 163 to 205 (FLTTVTIPNGDTYCTFNFASWGGTPEERLKVAITMLTARGIIR) are Extracellular-facing. A helical transmembrane segment spans residues 206–226 (FVIGFSLPMSIVAICYGLIAA). The Cytoplasmic portion of the chain corresponds to 227–242 (KIHKKGMIKSSRPLRV). Residues 243-266 (LTAVVASFFICWFPFQLVALLGTV) form a helical membrane-spanning segment. The Extracellular segment spans residues 267-286 (WLKEMLFYGKYKIIDILVNP). The chain crosses the membrane as a helical span at residues 287–306 (TSSLAFFNSCLNPMLYVFVG). The Cytoplasmic portion of the chain corresponds to 307 to 351 (QDFRERLIHSLPTSLERALSEDSAPTNDTAANSASPPAETELQAM). Residues 325–351 (LSEDSAPTNDTAANSASPPAETELQAM) form a disordered region. Polar residues predominate over residues 329-341 (SAPTNDTAANSAS).

The protein belongs to the G-protein coupled receptor 1 family. Interacts with Amyloid-beta protein 42, product of APP; the interaction takes place at the cell surface and the complex is then rapidly internalized. In terms of assembly, (Microbial infection) Interacts with Staphylococcus aureus protein SSL13; this interaction leads to the activation of neutrophils. In terms of tissue distribution, detected in lung, bone marrow, neutrophils, spleen and testis.

Its subcellular location is the cell membrane. Functionally, low affinity receptor for N-formyl-methionyl peptides, which are powerful neutrophil chemotactic factors. Binding of FMLP to the receptor causes activation of neutrophils. This response is mediated via a G-protein that activates a phosphatidylinositol-calcium second messenger system. The activation of LXA4R could result in an anti-inflammatory outcome counteracting the actions of pro-inflammatory signals such as LTB4 (leukotriene B4). Receptor for the chemokine-like protein FAM19A5, mediating FAM19A5-stimulated macrophage chemotaxis and the inhibitory effect on TNFSF11/RANKL-induced osteoclast differentiation. Acts as a receptor for humanin. This chain is N-formyl peptide receptor 2 (FPR2), found in Homo sapiens (Human).